A 378-amino-acid polypeptide reads, in one-letter code: Mannitol-1-phosphate 5-dehydrogenase (378 aa).

4 to 15 (SVHFGAGNIGRG) contacts NAD(+).

The protein belongs to the mannitol dehydrogenase family.

The enzyme catalyses D-mannitol 1-phosphate + NAD(+) = beta-D-fructose 6-phosphate + NADH + H(+). In Streptococcus pneumoniae (strain 70585), this protein is Mannitol-1-phosphate 5-dehydrogenase.